The sequence spans 179 residues: Inner membrane-spanning protein YciB (179 aa).

Helical transmembrane passes span 22–42, 50–70, 76–96, 121–141, and 149–169; these read IYAA…YSWV, MALI…FFHN, WKVT…QWVM, LAWA…AFWL, and FKVF…GVYI.

Belongs to the YciB family.

The protein localises to the cell inner membrane. Its function is as follows. Plays a role in cell envelope biogenesis, maintenance of cell envelope integrity and membrane homeostasis. The polypeptide is Inner membrane-spanning protein YciB (Salmonella arizonae (strain ATCC BAA-731 / CDC346-86 / RSK2980)).